The following is a 272-amino-acid chain: Cell division protein FtsQ (272 aa).

The Cytoplasmic portion of the chain corresponds to 1-43 (MEYNPPNTRERIAARRQRLRQPSSEPAIPGWRRRFIDGLQSGR). The helical transmembrane segment at 44–64 (IVSGAVFVVSCLALFYVLFSS) threads the bilayer. Residues 65–272 (QFRVQTVEVV…FYQNRTDGRS (208 aa)) are Extracellular-facing. The POTRA domain maps to 66–133 (FRVQTVEVVG…DRARIVIVER (68 aa)).

It belongs to the FtsQ/DivIB family. FtsQ subfamily.

It localises to the cell membrane. Its function is as follows. Essential cell division protein. This is Cell division protein FtsQ from Chloroflexus aggregans (strain MD-66 / DSM 9485).